The following is a 125-amino-acid chain: Large ribosomal subunit protein bL19 (125 aa).

Belongs to the bacterial ribosomal protein bL19 family.

Its function is as follows. This protein is located at the 30S-50S ribosomal subunit interface and may play a role in the structure and function of the aminoacyl-tRNA binding site. The polypeptide is Large ribosomal subunit protein bL19 (Wolbachia sp. subsp. Brugia malayi (strain TRS)).